Reading from the N-terminus, the 597-residue chain is Centrosomal protein of 70 kDa (597 aa).

Residues 1–24 (MFPVAPKPQDSNQPSDRLMTEKQQ) are disordered. Coiled coils occupy residues 66–179 (MRQN…QTEV) and 254–320 (TYKG…QELI). The TPR repeat unit spans residues 483–516 (NGVYPRMNEVYTRLGEMNNAVRNLQELLELDSSS).

In terms of assembly, directly interacts with tubulin-gamma; this interaction determines centrosomal localization.

Its subcellular location is the cytoplasm. It is found in the cytoskeleton. The protein resides in the microtubule organizing center. The protein localises to the centrosome. Plays a role in the organization of both preexisting and nascent microtubules in interphase cells. During mitosis, required for the organization and orientation of the mitotic spindle. The chain is Centrosomal protein of 70 kDa (CEP70) from Macaca fascicularis (Crab-eating macaque).